Reading from the N-terminus, the 117-residue chain is Small ribosomal subunit protein uS19c (117 aa).

Belongs to the universal ribosomal protein uS19 family.

The protein localises to the plastid. Protein S19 forms a complex with S13 that binds strongly to the 16S ribosomal RNA. This is Small ribosomal subunit protein uS19c (rps19) from Helicosporidium sp. subsp. Simulium jonesii (Green alga).